The chain runs to 389 residues: Phospho-N-acetylmuramoyl-pentapeptide-transferase (389 aa).

A run of 11 helical transmembrane segments spans residues tyrosine 21–glycine 41, threonine 71–alanine 91, phenylalanine 97–tyrosine 117, phenylalanine 134–alanine 154, tryptophan 167–phenylalanine 187, valine 190–threonine 210, glycine 222–valine 242, alanine 259–phenylalanine 279, valine 286–isoleucine 306, isoleucine 311–valine 331, and glutamine 366–leucine 386.

The protein belongs to the glycosyltransferase 4 family. MraY subfamily. It depends on Mg(2+) as a cofactor.

The protein localises to the cell inner membrane. It carries out the reaction UDP-N-acetyl-alpha-D-muramoyl-L-alanyl-gamma-D-glutamyl-meso-2,6-diaminopimeloyl-D-alanyl-D-alanine + di-trans,octa-cis-undecaprenyl phosphate = di-trans,octa-cis-undecaprenyl diphospho-N-acetyl-alpha-D-muramoyl-L-alanyl-D-glutamyl-meso-2,6-diaminopimeloyl-D-alanyl-D-alanine + UMP. Its pathway is cell wall biogenesis; peptidoglycan biosynthesis. Functionally, catalyzes the initial step of the lipid cycle reactions in the biosynthesis of the cell wall peptidoglycan: transfers peptidoglycan precursor phospho-MurNAc-pentapeptide from UDP-MurNAc-pentapeptide onto the lipid carrier undecaprenyl phosphate, yielding undecaprenyl-pyrophosphoryl-MurNAc-pentapeptide, known as lipid I. This chain is Phospho-N-acetylmuramoyl-pentapeptide-transferase, found in Bordetella petrii (strain ATCC BAA-461 / DSM 12804 / CCUG 43448).